The chain runs to 354 residues: NADH-quinone oxidoreductase subunit H (354 aa).

Helical transmembrane passes span 23–43 (LVRA…LILW), 91–111 (YIIA…VIPF), 124–144 (LLYV…AGWA), 162–182 (ISYE…TGSL), 203–223 (ILSW…ISGV), 250–270 (GMAF…ISAL), 291–311 (IPGF…FIWL), and 330–350 (IFIP…VSPW).

It belongs to the complex I subunit 1 family. NDH-1 is composed of 14 different subunits. Subunits NuoA, H, J, K, L, M, N constitute the membrane sector of the complex.

The protein localises to the cell inner membrane. The enzyme catalyses a quinone + NADH + 5 H(+)(in) = a quinol + NAD(+) + 4 H(+)(out). Functionally, NDH-1 shuttles electrons from NADH, via FMN and iron-sulfur (Fe-S) centers, to quinones in the respiratory chain. The immediate electron acceptor for the enzyme in this species is believed to be ubiquinone. Couples the redox reaction to proton translocation (for every two electrons transferred, four hydrogen ions are translocated across the cytoplasmic membrane), and thus conserves the redox energy in a proton gradient. This subunit may bind ubiquinone. In Ralstonia pickettii (strain 12J), this protein is NADH-quinone oxidoreductase subunit H.